A 276-amino-acid polypeptide reads, in one-letter code: SRR1-like protein (276 aa).

Residue serine 30 is modified to Phosphoserine. Position 34 is a phosphotyrosine (tyrosine 34).

This sequence belongs to the SRR1 family.

Possible regulator involved in a circadian clock input pathway. In Drosophila melanogaster (Fruit fly), this protein is SRR1-like protein.